Here is a 202-residue protein sequence, read N- to C-terminus: Small ribosomal subunit protein uS4 (202 aa).

Basic residues predominate over residues 1 to 13; the sequence is MSRYRGPRLRVTR. The segment at 1–42 is disordered; the sequence is MSRYRGPRLRVTRRLGELPGLTRKASKKSNPPGQHGQARRKR. The S4 RNA-binding domain maps to 90–152; the sequence is NRLDNVCFRL…KASKKLVEGN (63 aa).

It belongs to the universal ribosomal protein uS4 family. Part of the 30S ribosomal subunit. Contacts protein S5. The interaction surface between S4 and S5 is involved in control of translational fidelity.

In terms of biological role, one of the primary rRNA binding proteins, it binds directly to 16S rRNA where it nucleates assembly of the body of the 30S subunit. Functionally, with S5 and S12 plays an important role in translational accuracy. This chain is Small ribosomal subunit protein uS4, found in Prochlorococcus marinus (strain AS9601).